The chain runs to 524 residues: Sterol O-acyltransferase 2 (524 aa).

The segment at 1 to 31 is disordered; sequence MEPKAPQLRRRERQGEEQENGACGEGNTRTH. The Cytoplasmic segment spans residues 1-118; sequence MEPKAPQLRR…LDELMGVQHF (118 aa). Histidine 117 provides a ligand contact to cholesterol. The chain crosses the membrane as a helical span at residues 119-140; the sequence is RTIYHMFIAGLCVLIISTLAID. Topologically, residues 141 to 160 are lumenal; that stretch reads FIDEGRLMLEFDLLLFSFGQ. Residues 161–186 form a helical membrane-spanning segment; the sequence is LPLALMMWVPMFLSTLLLPYQTLRLW. At 187-198 the chain is on the cytoplasmic side; it reads ARPRSGGAWTLG. Residues 199-222 traverse the membrane as a helical segment; the sequence is ASLGCVLLAAHAAVLCVLPVHVSV. Residues 223–230 lie on the Lumenal side of the membrane; the sequence is KHELPPAS. The chain crosses the membrane as a helical span at residues 231 to 254; that stretch reads RCVLVFEQVRFLMKSYSFLRETVP. Over 255–295 the chain is Cytoplasmic; sequence GIFCVRGGKGICTPSFSSYLYFLFCPTLIYRETYPRTPSIR. Position 279 is a cysteine sulfenic acid (-SOH); alternate (cysteine 279). Cysteine 279 participates in a covalent cross-link: Glycyl cysteine thioester (Cys-Gly) (interchain with G-Cter in ubiquitin); alternate. The helical transmembrane segment at 296 to 328 threads the bilayer; sequence WNYVAKNFAQALGCLLYACFILGRLCVPVFANM. The Lumenal segment spans residues 329 to 345; it reads SREPFSTRALLLSILHA. The helical transmembrane segment at 346–371 threads the bilayer; it reads TGPGIFMLLLIFFAFLHCWLNAFAEM. At 372-419 the chain is on the cytoplasmic side; it reads LRFGDRMFYRDWWNSTSFSNYYRTWNVVVHDWLYSYVYQDGLWLLGRQ. The FYXDWWN motif motif lies at 379–385; the sequence is FYRDWWN. The an acyl-CoA site is built by asparagine 391, arginine 394, asparagine 397, histidine 401, tyrosine 409, and serine 432. The chain crosses the membrane as a helical span at residues 420-444; that stretch reads GRGAAMLGVFLVSALVHEYIFCFVL. Residue histidine 436 is part of the active site. The Lumenal portion of the chain corresponds to 445–450; it reads GFFYPV. The chain crosses the membrane as a helical span at residues 451–466; the sequence is MLILFLVVGGLLNFTM. The Cytoplasmic portion of the chain corresponds to 467–472; it reads NDRHTG. Residues 473–504 form a helical membrane-spanning segment; that stretch reads PAWNILMWTFLFLGQGIQVSLYCQEWYARRHC. The Lumenal segment spans residues 505 to 524; sequence PLPQPTFWELVTPRSWSCHP.

This sequence belongs to the membrane-bound acyltransferase family. Sterol o-acyltransferase subfamily. As to quaternary structure, may form homo- or heterodimers. Interacts with INSIG1; the interaction is direct and promotes association with AMFR/gp78. Polyubiquitinated by AMFR/gp78 at Cys-279, leading to its degradation when the lipid levels are low. Association with AMFR/gp78 is mediated via interaction with INSIG1. High concentration of cholesterol and fatty acid results in Cys-279 oxidation, preventing ubiquitination at the same site, resulting in protein stabilization. In terms of processing, oxidized at Cys-279: high concentration of cholesterol and fatty acid induce reactive oxygen species, which oxidizes Cys-279, preventing ubiquitination at the same site, and resulting in protein stabilization.

It is found in the endoplasmic reticulum membrane. The catalysed reaction is a sterol + a long-chain fatty acyl-CoA = a long-chain 3-hydroxysterol ester + CoA. The enzyme catalyses cholesterol + an acyl-CoA = a cholesterol ester + CoA. It carries out the reaction cholesterol + (9Z)-octadecenoyl-CoA = cholesteryl (9Z-octadecenoate) + CoA. It catalyses the reaction (5Z,8Z,11Z,14Z,17Z)-eicosapentaenoyl-CoA + cholesterol = (5Z,8Z,11Z,14Z,17Z-eicosapentaenoyl)-cholesterol + CoA. The catalysed reaction is (9Z,12Z,15Z)-octadecatrienoyl-CoA + cholesterol = (9Z,12Z,15Z-octadecatrienoyl)-cholesterol + CoA. The enzyme catalyses (5Z,8Z,11Z,14Z)-eicosatetraenoyl-CoA + cholesterol = cholesteryl (5Z,8Z,11Z,14Z)-eicosatetraenoate + CoA. Functionally, catalyzes the formation of fatty acid-cholesterol esters, which are less soluble in membranes than cholesterol. Plays a role in lipoprotein assembly and dietary cholesterol absorption. Utilizes oleoyl-CoA ((9Z)-octadecenoyl-CoA) and linolenoyl-CoA ((9Z,12Z,15Z)-octadecatrienoyl-CoA) as substrates. May provide cholesteryl esters for lipoprotein secretion from hepatocytes and intestinal mucosa. This chain is Sterol O-acyltransferase 2, found in Rattus norvegicus (Rat).